Reading from the N-terminus, the 87-residue chain is Large ribosomal subunit protein bL27 (87 aa).

The interval 1-21 (MAHKKAGGSSRNGRDSESKRL) is disordered.

This sequence belongs to the bacterial ribosomal protein bL27 family.

The protein is Large ribosomal subunit protein bL27 of Aromatoleum aromaticum (strain DSM 19018 / LMG 30748 / EbN1) (Azoarcus sp. (strain EbN1)).